The sequence spans 50 residues: Large ribosomal subunit protein bL33 (50 aa).

This sequence belongs to the bacterial ribosomal protein bL33 family.

The polypeptide is Large ribosomal subunit protein bL33 (Koribacter versatilis (strain Ellin345)).